The sequence spans 49 residues: MRVNITLEHKESGERLYLTSKNKRNTPDRLQLKKYSPKLRKHVTFTEVK.

This sequence belongs to the bacterial ribosomal protein bL33 family.

This Streptococcus pyogenes serotype M18 (strain MGAS8232) protein is Large ribosomal subunit protein bL33.